We begin with the raw amino-acid sequence, 278 residues long: Dermonecrotic toxin LspiSicTox-betaIE2ii (278 aa).

Residue His5 is part of the active site. Residues Glu25 and Asp27 each contribute to the Mg(2+) site. His41 serves as the catalytic Nucleophile. Intrachain disulfides connect Cys45/Cys51 and Cys47/Cys190. Asp85 lines the Mg(2+) pocket.

This sequence belongs to the arthropod phospholipase D family. Class II subfamily. Mg(2+) is required as a cofactor. Expressed by the venom gland.

The protein resides in the secreted. The enzyme catalyses an N-(acyl)-sphingosylphosphocholine = an N-(acyl)-sphingosyl-1,3-cyclic phosphate + choline. It catalyses the reaction an N-(acyl)-sphingosylphosphoethanolamine = an N-(acyl)-sphingosyl-1,3-cyclic phosphate + ethanolamine. It carries out the reaction a 1-acyl-sn-glycero-3-phosphocholine = a 1-acyl-sn-glycero-2,3-cyclic phosphate + choline. The catalysed reaction is a 1-acyl-sn-glycero-3-phosphoethanolamine = a 1-acyl-sn-glycero-2,3-cyclic phosphate + ethanolamine. Dermonecrotic toxins cleave the phosphodiester linkage between the phosphate and headgroup of certain phospholipids (sphingolipid and lysolipid substrates), forming an alcohol (often choline) and a cyclic phosphate. This toxin acts on sphingomyelin (SM). It may also act on ceramide phosphoethanolamine (CPE), lysophosphatidylcholine (LPC) and lysophosphatidylethanolamine (LPE), but not on lysophosphatidylserine (LPS), and lysophosphatidylglycerol (LPG). It acts by transphosphatidylation, releasing exclusively cyclic phosphate products as second products. Induces dermonecrosis, hemolysis, increased vascular permeability, edema, inflammatory response, and platelet aggregation. In Loxosceles spinulosa (Recluse spider), this protein is Dermonecrotic toxin LspiSicTox-betaIE2ii.